Here is an 82-residue protein sequence, read N- to C-terminus: ATP synthase subunit c, chloroplastic (82 aa).

2 consecutive transmembrane segments (helical) span residues 3–23 and 57–77; these read PIIS…AAIG and LAFM…LLFA.

It belongs to the ATPase C chain family. In terms of assembly, F-type ATPases have 2 components, F(1) - the catalytic core - and F(0) - the membrane proton channel. F(1) has five subunits: alpha(3), beta(3), gamma(1), delta(1), epsilon(1). F(0) has four main subunits: a(1), b(1), b'(1) and c(10-14). The alpha and beta chains form an alternating ring which encloses part of the gamma chain. F(1) is attached to F(0) by a central stalk formed by the gamma and epsilon chains, while a peripheral stalk is formed by the delta, b and b' chains.

It localises to the plastid. It is found in the chloroplast thylakoid membrane. Its function is as follows. F(1)F(0) ATP synthase produces ATP from ADP in the presence of a proton or sodium gradient. F-type ATPases consist of two structural domains, F(1) containing the extramembraneous catalytic core and F(0) containing the membrane proton channel, linked together by a central stalk and a peripheral stalk. During catalysis, ATP synthesis in the catalytic domain of F(1) is coupled via a rotary mechanism of the central stalk subunits to proton translocation. In terms of biological role, key component of the F(0) channel; it plays a direct role in translocation across the membrane. A homomeric c-ring of between 10-14 subunits forms the central stalk rotor element with the F(1) delta and epsilon subunits. This is ATP synthase subunit c, chloroplastic from Phaeodactylum tricornutum (strain CCAP 1055/1).